The primary structure comprises 1171 residues: Protein diaphanous homolog 3 (1171 aa).

The span at 1–15 shows a compositional bias: basic and acidic residues; sequence MERHRARALGRDSKS. Residues 1 to 40 are disordered; sequence MERHRARALGRDSKSSRRKGLQSAPPAGPYEPGEKRPKLH. The Nuclear localization signal signature appears at 16 to 39; it reads SRRKGLQSAPPAGPYEPGEKRPKL. Thr-47 is modified (phosphothreonine). At Ser-56 the chain carries Phosphoserine. The segment at 60–95 is disordered; that stretch reads PGSKKERPPLPHLKTVSGISDSSSLSSETMENNPKA. A compositionally biased stretch (low complexity) spans 76–86; it reads SGISDSSSLSS. Residues 93 to 455 form the GBD/FH3 domain; the sequence is PKALPESEVL…QIVLHRDGTD (363 aa). Ser-154 is subject to Phosphoserine. Coiled coils occupy residues 373–403 and 478–533; these read EHKE…YSML and QAKL…FGAL. Positions 532 to 601 are disordered; the sequence is ALPPGTKIPL…PPPPLGFLGG (70 aa). The region spanning 540 to 610 is the FH1 domain; the sequence is PLQPSVEGEA…GQSSIPLNLP (71 aa). The segment covering 553-596 has biased composition (pro residues); it reads ALPPAPPALSGGVPPPPPPPPPPPPPLPGMPMPFGGPVPPPPPL. Ser-604 carries the post-translational modification Phosphoserine. Residues 615 to 1013 enclose the FH2 domain; it reads PKKEFKPEIS…EKRARIAKER (399 aa). 2 coiled-coil regions span residues 887–918 and 988–1038; these read DKAS…LETF and MLAL…GDET. The DAD domain maps to 1036–1066; sequence DETGVMDSLLEALQSGAAFRDRRKRTPKLKD. Phosphoserine occurs at positions 1072 and 1157. The Nuclear export signal signature appears at 1162–1171; it reads EALLARLRAL.

This sequence belongs to the formin homology family. Diaphanous subfamily. Post-translationally, ubiquitinated.

It is found in the cytoplasm. The protein localises to the nucleus. Actin nucleation and elongation factor required for the assembly of F-actin structures, such as actin cables and stress fibers. Required for cytokinesis, stress fiber formation and transcriptional activation of the serum response factor. Binds to GTP-bound form of Rho and to profilin: acts in a Rho-dependent manner to recruit profilin to the membrane, where it promotes actin polymerization. DFR proteins couple Rho and Src tyrosine kinase during signaling and the regulation of actin dynamics. Also acts as an actin nucleation and elongation factor in the nucleus by promoting nuclear actin polymerization inside the nucleus to drive serum-dependent SRF-MRTFA activity. This chain is Protein diaphanous homolog 3 (Diaph3), found in Mus musculus (Mouse).